Reading from the N-terminus, the 449-residue chain is Protein cortex (449 aa).

WD repeat units follow at residues 108 to 148, 149 to 188, 198 to 237, 283 to 327, 345 to 382, and 386 to 425; these read TYSY…ISQG, YAEY…KIDS, NRNC…ISWR, DSDW…VRDT, TGEL…DQWG, and SGLD…KKMK. Positions 386–397 match the D-box motif; that stretch reads SGLDRVRTMVFS.

It belongs to the WD repeat CORT family.

It localises to the cytoplasm. Functionally, controls wing pigmentation patterning by regulating scale cell development, thereby playing a key role in mimicry and crypsis. Probably acts as an activator of the anaphase promoting complex/cyclosome (APC/C) that promotes the ubiquitin ligase activity and substrate specificity of the APC/C. The sequence is that of Protein cortex from Heliconius erato (Crimson patched longwing butterfly).